Consider the following 84-residue polypeptide: Large ribosomal subunit protein bL27 (84 aa).

Residues 1–24 (MAHKKGGGSSKNGRDSNSQRLGVK) form a disordered region.

The protein belongs to the bacterial ribosomal protein bL27 family.

The protein is Large ribosomal subunit protein bL27 of Leptospira borgpetersenii serovar Hardjo-bovis (strain JB197).